The chain runs to 308 residues: Atrochrysone carboxyl ACP thioesterase (308 aa).

Residues His99, His101, Asp103, and His104 each coordinate Zn(2+). Asp103 (proton donor/acceptor) is an active-site residue.

This sequence belongs to the metallo-beta-lactamase superfamily. It depends on Zn(2+) as a cofactor.

The enzyme catalyses atrochrysone carboxyl-[ACP] + H2O = atrochrysone carboxylate + holo-[ACP] + H(+). The protein operates within secondary metabolite biosynthesis. In terms of biological role, atrochrysone carboxyl ACP thioesterase; part of the gene cluster that mediates the biosynthesis of physcion, a natural anthraquinone fungicide that can prevent plant fungal infections. The pathway begins with the polyketide synthase AcPKS that condenses 8 malonyl-CoA units to synthesize atrochrysone thioester which is released from the synthase by the atrochrysone carboxyl ACP thioesterase AcTE that breaks the thioester bond and leads to free atrochrysone carboxylic acid. Spontaneous decarboxylation of atrochrysone carboxylic acid leads to the formation of atrochrysone. Then, atrochrysone undergoes spontaneous dehydration and oxidation, giving the products emodin anthrone and emodin. The O-methyltransferase AcOMT then methylates the C-6 hydroxyl of emodin to form physcion. The protein is Atrochrysone carboxyl ACP thioesterase of Aspergillus chevalieri (Eurotium chevalieri).